Reading from the N-terminus, the 511-residue chain is Tryptophan 5-halogenase PyrH (511 aa).

7 residues coordinate FAD: Gly-10, Ala-13, Ser-36, Val-39, Ile-42, Val-44, and Ala-47. Ser-50 is a binding site for L-tryptophan. Lys-75 is a catalytic residue. Residues Pro-93, Gln-160, and Gln-163 each coordinate L-tryptophan. FAD-binding residues include Val-195 and Leu-345. Thr-356 and Gly-357 together coordinate chloride. Ile-358 contributes to the FAD binding site. L-tryptophan-binding residues include Gly-450 and Tyr-454.

It belongs to the flavin-dependent halogenase family. Bacterial tryptophan halogenase subfamily. Homodimer.

The enzyme catalyses L-tryptophan + FADH2 + chloride + O2 = 5-chloro-L-tryptophan + FAD + 2 H2O. It functions in the pathway antibiotic biosynthesis. In terms of biological role, involved in the biosynthesis of the antibiotic compound pyrroindomycin B. Catalyzes the chlorination of tryptophan (Trp) at C5 position to yield 5-chloro-L-tryptophan. It is also able to use bromide ions to generate monobrominated Trp, but the brominating activity is only about 75% of the chlorinating activity. The polypeptide is Tryptophan 5-halogenase PyrH (Streptomyces rugosporus).